The sequence spans 365 residues: Chorismate synthase (365 aa).

Residues 41–60 (MQHDLDRRRPGTSRYTTARR) are disordered. Residues R48 and R54 each contribute to the NADP(+) site. Residues 125-127 (RSS), 238-239 (NA), G278, 293-297 (KPTSS), and R319 each bind FMN.

Belongs to the chorismate synthase family. In terms of assembly, homotetramer. The cofactor is FMNH2.

The enzyme catalyses 5-O-(1-carboxyvinyl)-3-phosphoshikimate = chorismate + phosphate. It participates in metabolic intermediate biosynthesis; chorismate biosynthesis; chorismate from D-erythrose 4-phosphate and phosphoenolpyruvate: step 7/7. In terms of biological role, catalyzes the anti-1,4-elimination of the C-3 phosphate and the C-6 proR hydrogen from 5-enolpyruvylshikimate-3-phosphate (EPSP) to yield chorismate, which is the branch point compound that serves as the starting substrate for the three terminal pathways of aromatic amino acid biosynthesis. This reaction introduces a second double bond into the aromatic ring system. The protein is Chorismate synthase of Shewanella amazonensis (strain ATCC BAA-1098 / SB2B).